The sequence spans 202 residues: MMTQYKLQLEATNFTKQQLQQQLDILEQNNILQIALAGRSNVGKSSLINALAGRKQLAKTSGTPGKTRSINFYAVYPNTFMLVDLPGYGYAQCSKIERQHWAMLIEYYLKNCSKLKAFVLLIDCRIPPQKLDYELAEFATSYCIPLIPVLTKIDKCKLVEQNKRQKEWRALLNNTQPLLVSSKNMKGVQQLWERIQYTIDSY.

Residues 30–201 (NILQIALAGR…WERIQYTIDS (172 aa)) form the EngB-type G domain. GTP contacts are provided by residues 38–45 (GRSNVGKS), 65–69 (GKTRS), 84–87 (DLPG), 151–154 (TKID), and 180–182 (VSS). Residues Ser45 and Thr67 each contribute to the Mg(2+) site.

It belongs to the TRAFAC class TrmE-Era-EngA-EngB-Septin-like GTPase superfamily. EngB GTPase family. It depends on Mg(2+) as a cofactor.

Functionally, necessary for normal cell division and for the maintenance of normal septation. This is Probable GTP-binding protein EngB from Lawsonia intracellularis (strain PHE/MN1-00).